A 210-amino-acid chain; its full sequence is Fibrillarin-like rRNA/tRNA 2'-O-methyltransferase (210 aa).

Residues 72–73 (TT), 88–89 (EF), 113–114 (DA), and 134–137 (DVAT) contribute to the S-adenosyl-L-methionine site.

It belongs to the methyltransferase superfamily. Fibrillarin family. Interacts with nop5. Component of box C/D small ribonucleoprotein (sRNP) particles that contain rpl7ae, FlpA and nop5, plus a guide RNA.

Its function is as follows. Involved in pre-rRNA and tRNA processing. Utilizes the methyl donor S-adenosyl-L-methionine to catalyze the site-specific 2'-hydroxyl methylation of ribose moieties in rRNA and tRNA. Site specificity is provided by a guide RNA that base pairs with the substrate. Methylation occurs at a characteristic distance from the sequence involved in base pairing with the guide RNA. This Halobacterium salinarum (strain ATCC 29341 / DSM 671 / R1) protein is Fibrillarin-like rRNA/tRNA 2'-O-methyltransferase.